Reading from the N-terminus, the 388-residue chain is Pepsin A-4 (388 aa).

The first 15 residues, 1–15 (MKWLLLLGLVALSEC), serve as a signal peptide directing secretion. The propeptide at 16 to 62 (IMYKVPLIRKKSLRRTLSERGLLKDFLKKHNLNPARKYFPQWEAPTL) is activation peptide. A Peptidase A1 domain is found at 76–385 (YFGTIGIGTP…DRANNQVGLA (310 aa)). D94 is a catalytic residue. Cysteines 107 and 112 form a disulfide. A Phosphoserine modification is found at S130. A disulfide bond links C268 and C272. D277 is a catalytic residue. An intrachain disulfide couples C311 to C344.

It belongs to the peptidase A1 family.

Its subcellular location is the secreted. It carries out the reaction Preferential cleavage: hydrophobic, preferably aromatic, residues in P1 and P1' positions. Cleaves 1-Phe-|-Val-2, 4-Gln-|-His-5, 13-Glu-|-Ala-14, 14-Ala-|-Leu-15, 15-Leu-|-Tyr-16, 16-Tyr-|-Leu-17, 23-Gly-|-Phe-24, 24-Phe-|-Phe-25 and 25-Phe-|-Tyr-26 bonds in the B chain of insulin.. Functionally, shows particularly broad specificity; although bonds involving phenylalanine and leucine are preferred, many others are also cleaved to some extent. This chain is Pepsin A-4 (PGA4), found in Homo sapiens (Human).